The following is a 412-amino-acid chain: Argininosuccinate synthase (412 aa).

Residues 15-23 and Ala42 contribute to the ATP site; that span reads AYSGGLDTS. L-citrulline is bound by residues Tyr93 and Ser98. Gly123 is a binding site for ATP. L-aspartate-binding residues include Thr125, Asn129, and Asp130. Asn129 contacts L-citrulline. Arg133, Ser185, Ser194, Glu270, and Tyr282 together coordinate L-citrulline.

The protein belongs to the argininosuccinate synthase family. Type 1 subfamily. In terms of assembly, homotetramer.

It is found in the cytoplasm. The enzyme catalyses L-citrulline + L-aspartate + ATP = 2-(N(omega)-L-arginino)succinate + AMP + diphosphate + H(+). It participates in amino-acid biosynthesis; L-arginine biosynthesis; L-arginine from L-ornithine and carbamoyl phosphate: step 2/3. The protein is Argininosuccinate synthase of Psychrobacter arcticus (strain DSM 17307 / VKM B-2377 / 273-4).